The primary structure comprises 495 residues: Probable aspartic-type endopeptidase OPSB (495 aa).

An N-terminal signal peptide occupies residues 1–19; the sequence is MRGDSFIWSLATAIPLLST. Residues 73–408 enclose the Peptidase A1 domain; the sequence is YFCNLTLGTP…DLDNNEISIA (336 aa). The N-linked (GlcNAc...) asparagine glycan is linked to N76. The active site involves D91. Residue N136 is glycosylated (N-linked (GlcNAc...) asparagine). D290 is an active-site residue. N413 carries an N-linked (GlcNAc...) asparagine glycan. The segment at 448–470 is disordered; sequence TGLPGVETGVPGSRPPSSKAAGQ. Residue A467 is the site of GPI-anchor amidated alanine attachment. Residues 468-495 constitute a propeptide, removed in mature form; sequence AGQAKRPDFVLGVAAVGLAGAGMLFAAM.

It belongs to the peptidase A1 family.

It localises to the cell membrane. Its function is as follows. Probable GPI-anchored aspartic-type endopeptidase which contributes to virulence. The chain is Probable aspartic-type endopeptidase OPSB (OPSB) from Trichophyton verrucosum (strain HKI 0517).